The sequence spans 382 residues: Fetuin-B (382 aa).

Residues 1 to 15 form the signal peptide; sequence MGLLLPLALCILVLC. 2 consecutive Cystatin fetuin-B-type domains span residues 25–138 and 149–255; these read ALNP…YNCT and MTCP…VTCD. Residue Asn-37 is glycosylated (N-linked (GlcNAc...) asparagine). Cystine bridges form between Cys-93–Cys-104, Cys-117–Cys-137, and Cys-151–Cys-154. Residue Asn-136 is glycosylated (N-linked (GlcNAc...) asparagine). N-linked (GlcNAc...) asparagine glycosylation is present at Asn-182. 2 disulfides stabilise this stretch: Cys-216–Cys-224 and Cys-237–Cys-254. Polar residues-rich tracts occupy residues 262 to 276 and 286 to 295; these read PATGSENSAVNQKPT and QKNTPPTDSP. Disordered stretches follow at residues 262 to 320 and 363 to 382; these read PATG…EKGP and ARTAECPGPAQNASPLVLPP. Thr-289 and Thr-292 each carry an O-linked (GalNAc...) threonine glycan. A compositionally biased stretch (basic and acidic residues) spans 310 to 320; it reads LDDKNSQEKGP. A Phosphoserine modification is found at Ser-315.

It belongs to the fetuin family. In terms of tissue distribution, liver and testis.

Its subcellular location is the secreted. Protease inhibitor required for egg fertilization. Required to prevent premature zona pellucida hardening before fertilization, probably by inhibiting the protease activity of ASTL, a protease that mediates the cleavage of ZP2 and triggers zona pellucida hardening. The sequence is that of Fetuin-B (FETUB) from Homo sapiens (Human).